A 123-amino-acid polypeptide reads, in one-letter code: Large ribosomal subunit protein bL20 (123 aa).

The protein belongs to the bacterial ribosomal protein bL20 family.

Binds directly to 23S ribosomal RNA and is necessary for the in vitro assembly process of the 50S ribosomal subunit. It is not involved in the protein synthesizing functions of that subunit. The sequence is that of Large ribosomal subunit protein bL20 (rplT) from Chlamydia muridarum (strain MoPn / Nigg).